We begin with the raw amino-acid sequence, 164 residues long: HTH-type transcriptional regulator IscR (164 aa).

Residues 2 to 131 form the HTH rrf2-type domain; that stretch reads RLTSKGRYAV…NNITLAELVN (130 aa). The segment at residues 28-51 is a DNA-binding region (H-T-H motif); sequence LADISERQGISLSYLEQLFSRLRK. The [2Fe-2S] cluster site is built by C92, C98, and C104. The tract at residues 143–164 is disordered; sequence NNDTRRTANGRPQETINVNLRA. Over residues 152 to 164 the composition is skewed to polar residues; the sequence is GRPQETINVNLRA.

[2Fe-2S] cluster serves as cofactor.

In terms of biological role, regulates the transcription of several operons and genes involved in the biogenesis of Fe-S clusters and Fe-S-containing proteins. The chain is HTH-type transcriptional regulator IscR from Yersinia pseudotuberculosis serotype O:1b (strain IP 31758).